The primary structure comprises 188 residues: Elongation factor P (188 aa).

It belongs to the elongation factor P family.

The protein resides in the cytoplasm. Its pathway is protein biosynthesis; polypeptide chain elongation. Functionally, involved in peptide bond synthesis. Stimulates efficient translation and peptide-bond synthesis on native or reconstituted 70S ribosomes in vitro. Probably functions indirectly by altering the affinity of the ribosome for aminoacyl-tRNA, thus increasing their reactivity as acceptors for peptidyl transferase. In Chlorobium phaeobacteroides (strain DSM 266 / SMG 266 / 2430), this protein is Elongation factor P.